Reading from the N-terminus, the 709-residue chain is ATP-binding cassette sub-family F member 3 (709 aa).

At Ala2 the chain carries N-acetylalanine. Residue Ser83 is modified to Phosphoserine. Residues 129–143 (RLKAKQEKRSEKDTL) are compositionally biased toward basic and acidic residues. Positions 129–171 (RLKAKQEKRSEKDTLKTSNPLVLEEASASQAGSRKESRLESSG) are disordered. 3 positions are modified to phosphoserine: Ser155, Ser157, and Ser161. Basic and acidic residues predominate over residues 161-171 (SRKESRLESSG). ABC transporter domains are found at residues 178 to 424 (VRIE…LNQQ) and 492 to 707 (LQLD…RREG). 210-217 (GRNGLGKT) lines the ATP pocket. Residue Ser283 is modified to Phosphoserine. ATP is bound at residue 525-532 (GENGAGKS).

It belongs to the ABC transporter superfamily. ABCF family. EF3 subfamily.

Its function is as follows. Displays an antiviral effect against flaviviruses such as west Nile virus (WNV) in the presence of OAS1B. The sequence is that of ATP-binding cassette sub-family F member 3 (ABCF3) from Homo sapiens (Human).